The following is a 148-amino-acid chain: Lysozyme C (148 aa).

Residues 1–18 form the signal peptide; the sequence is MKALIVLGLVLLSVTVQG. A C-type lysozyme domain is found at 19-148; it reads KVFERCELAR…VRQYVQGCGV (130 aa). Cystine bridges form between cysteine 24–cysteine 146, cysteine 48–cysteine 134, cysteine 83–cysteine 99, and cysteine 95–cysteine 113. Active-site residues include glutamate 53 and aspartate 71.

It belongs to the glycosyl hydrolase 22 family. As to quaternary structure, monomer.

It localises to the secreted. It catalyses the reaction Hydrolysis of (1-&gt;4)-beta-linkages between N-acetylmuramic acid and N-acetyl-D-glucosamine residues in a peptidoglycan and between N-acetyl-D-glucosamine residues in chitodextrins.. In terms of biological role, lysozymes have primarily a bacteriolytic function; those in tissues and body fluids are associated with the monocyte-macrophage system and enhance the activity of immunoagents. The sequence is that of Lysozyme C (LYZ) from Homo sapiens (Human).